The chain runs to 361 residues: 24-methylenesterol C-methyltransferase 2 (361 aa).

Belongs to the class I-like SAM-binding methyltransferase superfamily. Erg6/SMT family.

The enzyme catalyses 24-methylidenelophenol + S-adenosyl-L-methionine = (Z)-24-ethylidenelophenol + S-adenosyl-L-homocysteine + H(+). It participates in steroid biosynthesis; sterol biosynthesis. Its function is as follows. Catalyzes the methyl transfer from S-adenosyl-methionine to the methylene group of 24-methylene lophenol to form 24-ethylidene lophenol. The chain is 24-methylenesterol C-methyltransferase 2 (SMT2) from Arabidopsis thaliana (Mouse-ear cress).